Reading from the N-terminus, the 326-residue chain is DNA-directed RNA polymerase subunit alpha (326 aa).

Residues methionine 1 to glutamate 231 are alpha N-terminal domain (alpha-NTD). Residues isoleucine 247–lysine 326 form an alpha C-terminal domain (alpha-CTD) region.

This sequence belongs to the RNA polymerase alpha chain family. As to quaternary structure, homodimer. The RNAP catalytic core consists of 2 alpha, 1 beta, 1 beta' and 1 omega subunit. When a sigma factor is associated with the core the holoenzyme is formed, which can initiate transcription.

It carries out the reaction RNA(n) + a ribonucleoside 5'-triphosphate = RNA(n+1) + diphosphate. Functionally, DNA-dependent RNA polymerase catalyzes the transcription of DNA into RNA using the four ribonucleoside triphosphates as substrates. The protein is DNA-directed RNA polymerase subunit alpha of Cupriavidus pinatubonensis (strain JMP 134 / LMG 1197) (Cupriavidus necator (strain JMP 134)).